The sequence spans 354 residues: Polyprenal reductase 1 (354 aa).

The next 6 helical transmembrane spans lie at 11 to 31 (PLLC…ALPI), 78 to 98 (FMHF…AIWF), 141 to 158 (YHVW…IQVL), 176 to 196 (MHIV…LSLA), 235 to 255 (PLLK…WGSL), and 301 to 321 (GMLV…VFVI).

Belongs to the steroid 5-alpha reductase family. Polyprenal reductase subfamily.

It localises to the cell membrane. The catalysed reaction is a di-trans,poly-cis-dolichal + NADP(+) = a di-trans,poly-cis-polyprenal + NADPH + H(+). The protein operates within protein modification; protein glycosylation. Plays a key role in early steps of protein N-linked glycosylation by being involved in the conversion of polyprenol into dolichol. Acts as a polyprenal reductase that mediates the reduction of polyprenal into dolichal in a NADP-dependent mechanism. Dolichols are required for the synthesis of dolichol-linked monosaccharides and the oligosaccharide precursor used for N-glycosylation. The protein is Polyprenal reductase 1 of Oryza sativa subsp. indica (Rice).